The sequence spans 322 residues: F-actin-capping protein subunit beta (322 aa).

The protein belongs to the F-actin-capping protein beta subunit family. Component of the F-actin capping complex, composed of a heterodimer of an alpha and a beta subunit.

It localises to the cytoplasm. The protein resides in the cytoskeleton. It is found in the actin patch. F-actin-capping proteins bind in a Ca(2+)-independent manner to the fast growing ends of actin filaments (barbed end) thereby blocking the exchange of subunits at these ends. Unlike other capping proteins (such as gelsolin and severin), these proteins do not sever actin filaments. This chain is F-actin-capping protein subunit beta (cap2), found in Aspergillus fumigatus (strain ATCC MYA-4609 / CBS 101355 / FGSC A1100 / Af293) (Neosartorya fumigata).